The following is a 1208-amino-acid chain: Neural cell adhesion molecule L1-like protein (1208 aa).

An N-terminal signal peptide occupies residues 1–24 (MEPLLLGRGLIVYLMFLLLKFSKA). Topologically, residues 25–1082 (IEIPSSVQQV…LYDDISTQGW (1058 aa)) are extracellular. 2 consecutive Ig-like C2-type domains span residues 35 to 124 (PTII…EEIE) and 128 to 223 (PSVP…MKLT). Cystine bridges form between Cys-57–Cys-109 and Cys-153–Cys-204. N-linked (GlcNAc...) asparagine glycans are attached at residues Lys-231 and Asn-299. Ig-like C2-type domains are found at residues 235–328 (PKLL…VIVE), 331–417 (PRWT…ANID), 423–510 (PLIQ…ANLD), and 515–607 (TKLR…TQVT). Disulfide bonds link Cys-262–Cys-310, Cys-352–Cys-401, Cys-445–Cys-494, and Cys-536–Cys-591. Asn-476 and Asn-482 each carry an N-linked (GlcNAc...) asparagine glycan. A DGEA motif is present at residues 555–558 (DGEA). Asn-562 and Asn-580 each carry an N-linked (GlcNAc...) asparagine glycan. 4 Fibronectin type-III domains span residues 614-709 (PPEN…TPPA), 714-807 (NPQN…SGED), 809-914 (PDTA…TPEG), and 918-1015 (QPTF…LGEG). A disordered region spans residues 693-716 (GRSQPSQPSDHHETPPAAPDRNPQ). Residues Asn-767, Asn-822, Asn-945, and Asn-1026 are each glycosylated (N-linked (GlcNAc...) asparagine). The chain crosses the membrane as a helical span at residues 1083–1103 (FIGLMCAIALLTLLLLTVCFV). Topologically, residues 1104–1208 (KRNRGGKYSV…SSTATFPLRA (105 aa)) are cytoplasmic. Positions 1131 to 1163 (ETFGEYSDSDEKPLKGSLRSLNRDMQPTESADS) are disordered. 3 positions are modified to phosphoserine: Ser-1147, Ser-1160, and Ser-1180. The span at 1149–1161 (RSLNRDMQPTESA) shows a compositional bias: polar residues. The FIG[AQ]Y motif lies at 1181 to 1185 (FIGAY). Residues 1189–1208 (KEKGSVESNGSSTATFPLRA) are disordered. Residues 1194–1208 (VESNGSSTATFPLRA) are compositionally biased toward polar residues.

It belongs to the immunoglobulin superfamily. L1/neurofascin/NgCAM family. As to quaternary structure, may interact with L1CAM. May interact with ITGB1/ITGA1 heterodimer and ITGB1/ITGA2 heterodimer as well as with ANK3. Cleavage by metalloprotease ADAM8 in the extracellular part generates 2 soluble forms (125 kDa and 165 kDa) in vitro and is inhibited by metalloprotease inhibitors. Cleaved by BACE1. In terms of processing, N-glycosylated. Contains N-linked oligosaccharides with a sulfated carbohydrate structure type HNK-1 (SO4-3-GlcUABeta1,3GalBeta1,4GlcNAc). Post-translationally, O-glycosylated. In terms of tissue distribution, expressed in the fetal and adult brain as well as in Schwann cell culture. Also detected in adult peripheral tissues.

The protein resides in the cell membrane. It is found in the secreted. It localises to the extracellular space. The protein localises to the extracellular matrix. In terms of biological role, extracellular matrix and cell adhesion protein that plays a role in nervous system development and in synaptic plasticity. Both soluble and membranous forms promote neurite outgrowth of cerebellar and hippocampal neurons and suppress neuronal cell death. Plays a role in neuronal positioning of pyramidal neurons and in regulation of both the number of interneurons and the efficacy of GABAergic synapses. May play a role in regulating cell migration in nerve regeneration and cortical development. Potentiates integrin-dependent cell migration towards extracellular matrix proteins. Recruits ANK3 to the plasma membrane. This chain is Neural cell adhesion molecule L1-like protein (CHL1), found in Homo sapiens (Human).